A 332-amino-acid chain; its full sequence is MIEPNYLPFILIGGGIIFVVLFFHYVPFFLWLSAKVSGVRISLVQLFLMRIRNVPPYVIVPAMIEAHKAGLSNITRDELEAHYMAGGHVEKVVHALVSASKANIELSFQMATGIDLAGRDVFEAVQMSVNPKVIDTPPVTAVAKDGIQLIAKARVTVRANIRQLVGGAGEDTILARVGEGIVSSIGSSENHKSVLENPDSISKLVLRKGLDAGTAFEILSIDIADIDIGRNIGAALQIDQANADKNIAQAKAEERRAMAVALEQEMKAKAEEARANVIQAEAEVPKAMAEAFRSGNLGIMDYYRMKNIQADTSMRENIAKPETTFGNEPLSK.

The helical transmembrane segment at 9–29 threads the bilayer; the sequence is FILIGGGIIFVVLFFHYVPFF.

This sequence belongs to the flotillin-like FloA family. Homooligomerizes.

Its subcellular location is the cell membrane. The protein resides in the membrane raft. Functionally, found in functional membrane microdomains (FMM) that may be equivalent to eukaryotic membrane rafts. FMMs are highly dynamic and increase in number as cells age. Flotillins are thought to be important factors in membrane fluidity. The polypeptide is Flotillin-like protein FloA (Phocaeicola vulgatus (strain ATCC 8482 / DSM 1447 / JCM 5826 / CCUG 4940 / NBRC 14291 / NCTC 11154) (Bacteroides vulgatus)).